A 449-amino-acid chain; its full sequence is Tubulin alpha-2B chain (449 aa).

GTP is bound at residue glutamine 11. Lysine 40 carries the N6-acetyllysine modification. Residues glutamate 71, serine 140, glycine 144, threonine 145, threonine 179, asparagine 206, and asparagine 228 each coordinate GTP. Glutamate 71 contacts Mg(2+). Residue glutamate 254 is part of the active site.

It belongs to the tubulin family. As to quaternary structure, dimer of alpha and beta chains. A typical microtubule is a hollow water-filled tube with an outer diameter of 25 nm and an inner diameter of 15 nM. Alpha-beta heterodimers associate head-to-tail to form protofilaments running lengthwise along the microtubule wall with the beta-tubulin subunit facing the microtubule plus end conferring a structural polarity. Microtubules usually have 13 protofilaments but different protofilament numbers can be found in some organisms and specialized cells. Mg(2+) serves as cofactor. Post-translationally, acetylation of alpha chains at Lys-40 stabilizes microtubules and affects affinity and processivity of microtubule motors. This modification has a role in multiple cellular functions, ranging from cell motility, cell cycle progression or cell differentiation to intracellular trafficking and signaling.

The protein resides in the cytoplasm. Its subcellular location is the cytoskeleton. It localises to the spindle. The protein localises to the nucleus. It catalyses the reaction GTP + H2O = GDP + phosphate + H(+). Its function is as follows. Tubulin is the major constituent of microtubules, a cylinder consisting of laterally associated linear protofilaments composed of alpha- and beta-tubulin heterodimers. Microtubules grow by the addition of GTP-tubulin dimers to the microtubule end, where a stabilizing cap forms. Below the cap, tubulin dimers are in GDP-bound state, owing to GTPase activity of alpha-tubulin. The chain is Tubulin alpha-2B chain (ALTBE) from Physarum polycephalum (Slime mold).